The following is a 419-amino-acid chain: UDP-N-acetylglucosamine 1-carboxyvinyltransferase (419 aa).

22–23 (KN) is a phosphoenolpyruvate binding site. Arg93 contacts UDP-N-acetyl-alpha-D-glucosamine. The Proton donor role is filled by Cys117. Cys117 is subject to 2-(S-cysteinyl)pyruvic acid O-phosphothioketal. Asp306 and Ile328 together coordinate UDP-N-acetyl-alpha-D-glucosamine.

Belongs to the EPSP synthase family. MurA subfamily.

It is found in the cytoplasm. It carries out the reaction phosphoenolpyruvate + UDP-N-acetyl-alpha-D-glucosamine = UDP-N-acetyl-3-O-(1-carboxyvinyl)-alpha-D-glucosamine + phosphate. It participates in cell wall biogenesis; peptidoglycan biosynthesis. Functionally, cell wall formation. Adds enolpyruvyl to UDP-N-acetylglucosamine. The sequence is that of UDP-N-acetylglucosamine 1-carboxyvinyltransferase from Vesicomyosocius okutanii subsp. Calyptogena okutanii (strain HA).